We begin with the raw amino-acid sequence, 21 residues long: Nucleoside diphosphate kinase (21 aa).

The active-site Pros-phosphohistidine intermediate is His4.

The protein belongs to the NDK family. In terms of assembly, homohexamer. Mg(2+) serves as cofactor.

It localises to the cytoplasm. It catalyses the reaction a 2'-deoxyribonucleoside 5'-diphosphate + ATP = a 2'-deoxyribonucleoside 5'-triphosphate + ADP. The catalysed reaction is a ribonucleoside 5'-diphosphate + ATP = a ribonucleoside 5'-triphosphate + ADP. Functionally, major role in the synthesis of nucleoside triphosphates other than ATP. The ATP gamma phosphate is transferred to the NDP beta phosphate via a ping-pong mechanism, using a phosphorylated active-site intermediate. The sequence is that of Nucleoside diphosphate kinase (NDK1) from Candida albicans (Yeast).